Reading from the N-terminus, the 193-residue chain is Superoxide dismutase [Fe] (193 aa).

Residues His-27, His-74, Asp-157, and His-161 each contribute to the Fe cation site.

Belongs to the iron/manganese superoxide dismutase family. Homodimer. The cofactor is Fe cation.

It catalyses the reaction 2 superoxide + 2 H(+) = H2O2 + O2. In terms of biological role, destroys superoxide anion radicals which are normally produced within the cells and which are toxic to biological systems. The chain is Superoxide dismutase [Fe] (sodB) from Salmonella typhimurium (strain LT2 / SGSC1412 / ATCC 700720).